We begin with the raw amino-acid sequence, 562 residues long: NAD-dependent malic enzyme (562 aa).

Residue Tyr101 is the Proton donor of the active site. An NAD(+)-binding site is contributed by Arg154. Catalysis depends on Lys172, which acts as the Proton acceptor. The a divalent metal cation site is built by Glu243, Asp244, and Asp267. NAD(+)-binding residues include Asp267 and Asn415.

This sequence belongs to the malic enzymes family. As to quaternary structure, homotetramer. It depends on Mg(2+) as a cofactor. Mn(2+) serves as cofactor.

It catalyses the reaction (S)-malate + NAD(+) = pyruvate + CO2 + NADH. It carries out the reaction oxaloacetate + H(+) = pyruvate + CO2. In Vibrio campbellii (strain ATCC BAA-1116), this protein is NAD-dependent malic enzyme.